We begin with the raw amino-acid sequence, 188 residues long: Anaphase-promoting complex subunit 10 (188 aa).

The DOC domain occupies 4–187; that stretch reads NSNINSNSRL…SPEVSMFQTL (184 aa).

It belongs to the APC10 family. The APC/C is composed of at least 13 subunits that stay tightly associated throughout the cell cycle: anapc1, anapc2, anapc3, anapc4, anapc5, anapc6, anapc7, anapc8, anapc10, anapc11, cdc20, cdc26 and cdh1.

It is found in the nucleus. It participates in protein modification; protein ubiquitination. Functionally, component of the anaphase promoting complex/cyclosome (APC/C), a cell cycle-regulated E3 ubiquitin-protein ligase complex that controls progression through mitosis and the G1 phase of the cell cycle. The chain is Anaphase-promoting complex subunit 10 (anapc10) from Dictyostelium discoideum (Social amoeba).